Here is a 200-residue protein sequence, read N- to C-terminus: Potassium-transporting ATPase KdpC subunit (200 aa).

A helical transmembrane segment spans residues 6 to 26; it reads PALVLLILLTLITGIAYPLLT.

This sequence belongs to the KdpC family. In terms of assembly, the system is composed of three essential subunits: KdpA, KdpB and KdpC.

It is found in the cell inner membrane. Functionally, part of the high-affinity ATP-driven potassium transport (or Kdp) system, which catalyzes the hydrolysis of ATP coupled with the electrogenic transport of potassium into the cytoplasm. This subunit acts as a catalytic chaperone that increases the ATP-binding affinity of the ATP-hydrolyzing subunit KdpB by the formation of a transient KdpB/KdpC/ATP ternary complex. The chain is Potassium-transporting ATPase KdpC subunit from Yersinia pseudotuberculosis serotype O:1b (strain IP 31758).